Here is a 376-residue protein sequence, read N- to C-terminus: Queuine tRNA-ribosyltransferase (376 aa).

Aspartate 89 acts as the Proton acceptor in catalysis. Substrate contacts are provided by residues 89-93 (DSGGF), aspartate 143, glutamine 194, and glycine 221. Positions 252 to 258 (GVGTPAN) are RNA binding. The Nucleophile role is filled by aspartate 271. Residues cysteine 309, cysteine 311, cysteine 314, and histidine 340 each coordinate Zn(2+).

The protein belongs to the queuine tRNA-ribosyltransferase family. Homodimer. Within each dimer, one monomer is responsible for RNA recognition and catalysis, while the other monomer binds to the replacement base PreQ1. Zn(2+) is required as a cofactor.

The catalysed reaction is 7-aminomethyl-7-carbaguanine + guanosine(34) in tRNA = 7-aminomethyl-7-carbaguanosine(34) in tRNA + guanine. It participates in tRNA modification; tRNA-queuosine biosynthesis. Catalyzes the base-exchange of a guanine (G) residue with the queuine precursor 7-aminomethyl-7-deazaguanine (PreQ1) at position 34 (anticodon wobble position) in tRNAs with GU(N) anticodons (tRNA-Asp, -Asn, -His and -Tyr). Catalysis occurs through a double-displacement mechanism. The nucleophile active site attacks the C1' of nucleotide 34 to detach the guanine base from the RNA, forming a covalent enzyme-RNA intermediate. The proton acceptor active site deprotonates the incoming PreQ1, allowing a nucleophilic attack on the C1' of the ribose to form the product. After dissociation, two additional enzymatic reactions on the tRNA convert PreQ1 to queuine (Q), resulting in the hypermodified nucleoside queuosine (7-(((4,5-cis-dihydroxy-2-cyclopenten-1-yl)amino)methyl)-7-deazaguanosine). This Clostridium kluyveri (strain NBRC 12016) protein is Queuine tRNA-ribosyltransferase.